Reading from the N-terminus, the 1451-residue chain is DNA polymerase III PolC-type (1451 aa).

Residues 416-575 enclose the Exonuclease domain; it reads FVIFDIETTG…YDTEALKKVF (160 aa).

Belongs to the DNA polymerase type-C family. PolC subfamily.

The protein resides in the cytoplasm. The catalysed reaction is DNA(n) + a 2'-deoxyribonucleoside 5'-triphosphate = DNA(n+1) + diphosphate. Its function is as follows. Required for replicative DNA synthesis. This DNA polymerase also exhibits 3' to 5' exonuclease activity. This is DNA polymerase III PolC-type from Mycoplasma genitalium (strain ATCC 33530 / DSM 19775 / NCTC 10195 / G37) (Mycoplasmoides genitalium).